The following is a 1881-amino-acid chain: Ankyrin-1 (1881 aa).

Residues 1 to 827 form an 89 kDa domain region; that stretch reads MPYSVGFREA…EDEGEELISF (827 aa). ANK repeat units follow at residues 44–73, 77–106, 110–139, 143–172, 174–201, 205–234, 238–267, 271–300, 304–333, 337–366, 370–399, 403–432, 436–465, 469–498, 502–531, 535–564, 568–597, 601–630, 634–663, 667–696, 700–729, 733–762, and 766–795; these read NGLN…ILET, KGNT…NVNA, KGFT…NQNV, DGFT…KGKV, LPAL…NPDV, TGFT…SVNF, NGIT…QIET, DELT…PIQA, NGLS…EIDD, DHLT…KPNS, NGFT…SIDA, SGLT…SPNV, KVET…KVNA, DDQT…NPNL, AGHT…SQAC, KGFT…HPNA, NGLT…SPHS, NGYT…SANA, QGVT…NGNL, SGLT…MVDA, MGYT…DVNA, LGYS…SPNE, and DGTT…ETSF. Residue asparagine 105 is modified to (3S)-3-hydroxyasparagine; by HIF1AN; partial. Residue asparagine 233 is modified to (3S)-3-hydroxyasparagine; by HIF1AN; partial. Serine 429 bears the Phosphoserine mark. 2 positions are modified to (3S)-3-hydroxyasparagine; by HIF1AN; partial: asparagine 431 and asparagine 464. (3S)-3-hydroxyasparagine; by HIF1AN; partial is present on residues asparagine 629 and asparagine 662. Aspartate 695 is subject to (3S)-3-hydroxyaspartate; by HIF1AN; partial. Position 728 is a (3S)-3-hydroxyasparagine; by HIF1AN; partial (asparagine 728). Serine 759 carries the phosphoserine modification. Asparagine 761 is modified ((3S)-3-hydroxyasparagine; by HIF1AN; partial). 4 positions are modified to phosphoserine: serine 781, serine 817, serine 834, and serine 856. The segment at 875 to 904 is disordered; the sequence is EEQEQASKEYDEDSLIPSSPATETSDNISP. Over residues 890 to 904 the composition is skewed to polar residues; that stretch reads IPSSPATETSDNISP. 2 consecutive ZU5 domains span residues 913–1068 and 1070–1216; these read FLVS…IMSR and CQDY…LSDC. Phosphothreonine is present on threonine 961. Residue tyrosine 1073 is modified to Phosphotyrosine. A Phosphoserine modification is found at serine 1082. Residues 1234-1362 form a UPA domain region; sequence TAVPYMAKFV…QHILCHLNIT (129 aa). Residues threonine 1378 and threonine 1380 each carry the phosphothreonine modification. A 55 kDa regulatory domain region spans residues 1383–1881; sequence ALRYSILSES…SKDHTSTPNP (499 aa). Serine 1390, serine 1392, and serine 1396 each carry phosphoserine. Threonine 1400 bears the Phosphothreonine mark. In terms of domain architecture, Death spans 1403-1487; that stretch reads AEMKMAVISE…EIVNMLEGSG (85 aa). 2 positions are modified to phosphoserine: serine 1428 and serine 1486. The segment at 1486-1510 is disordered; the sequence is SGRQSRNLKPDRRHTDRDYSLSPSQ. The segment covering 1493 to 1504 has biased composition (basic and acidic residues); sequence LKPDRRHTDRDY. Residues serine 1523 and serine 1533 each carry the phosphoserine modification. A disordered region spans residues 1583–1613; that stretch reads SSLECSKAEDSDATGHEWKLEGALSEEPRGP. Basic and acidic residues predominate over residues 1588 to 1612; it reads SKAEDSDATGHEWKLEGALSEEPRG. Serine 1617 bears the Phosphoserine mark. Disordered stretches follow at residues 1637-1703, 1718-1791, and 1840-1859; these read LLEQ…LQDW, QGSW…EAKN, and ADAA…EDPS. Over residues 1642–1658 the composition is skewed to basic and acidic residues; that stretch reads EGQRSEEKLPGSKRQDD. A phosphoserine mark is found at serine 1666, serine 1671, serine 1686, serine 1690, and serine 1696. The span at 1683–1694 shows a compositional bias: polar residues; the sequence is ITHSPTVSQVTE. Composition is skewed to polar residues over residues 1718–1739 and 1758–1771; these read QGSW…STMT and SEHT…AESS. Over residues 1772-1781 the composition is skewed to basic and acidic residues; it reads QADRDRRQQG.

Component of the ankyrin-1 complex in the erythrocyte, composed of ANK1, RHCE, RHAG, SLC4A1, EPB42, GYPA, GYPB and AQP1. Interacts with a number of integral membrane proteins and cytoskeletal proteins. Interacts (via N-terminus) with SPTB/spectrin (beta chain). Also interacts with TTN/titin. Isoform Mu17 interacts with OBSCN isoform 3/obscurin. Interacts with HIF1AN. Interacts (via ANK 1-5 repeats) with RHCE; this interaction mediates the primary membrane attachment site for ANK1. Interacts (via ANK 1-2 repeats) with AQP1 (via the N-terminal). Interacts (via ANK 1-13 repeats) with EPB42. Interacts directly with SLC4A1 (via the cytoplasmic domain); this interaction is mediated by the SLC4A1 Band 3-II and Band 3-III dimers. Regulated by phosphorylation. Post-translationally, palmitoylated. In terms of processing, hydroxylated by HIF1AN at several asparagine and 1 aspartate residue within ANK repeat region. Hydroxylation seems to increase the conformational stability of this region and may also modulate protein-protein interactions mediated by the ANK repeat region. (Microbial infection) Probably cleaved by P.falciparum SERA6; the cleavage probably causes the disruption of the actin cytoskeleton and the rupture of the erythrocyte cell membrane releasing the merozoites. In terms of tissue distribution, isoform Mu17, isoform Mu18, isoform Mu19 and isoform Mu20 are expressed in skeletal muscle. Isoform Br21 is expressed in brain.

It is found in the cytoplasm. It localises to the cytoskeleton. The protein localises to the membrane. Its subcellular location is the myofibril. The protein resides in the sarcomere. It is found in the m line. It localises to the sarcoplasmic reticulum. Functionally, component of the ankyrin-1 complex, a multiprotein complex involved in the stability and shape of the erythrocyte membrane. Attaches integral membrane proteins to cytoskeletal elements; binds to the erythrocyte membrane protein band 4.2, to Na-K ATPase, to the lymphocyte membrane protein GP85, and to the cytoskeletal proteins fodrin, tubulin, vimentin and desmin. Erythrocyte ankyrins also link spectrin (beta chain) to the cytoplasmic domain of the erythrocytes anion exchange protein; they retain most or all of these binding functions. Its function is as follows. Together with obscurin in skeletal muscle may provide a molecular link between the sarcoplasmic reticulum and myofibrils. This chain is Ankyrin-1, found in Homo sapiens (Human).